The sequence spans 231 residues: Lipoprotein-releasing system ATP-binding protein LolD (231 aa).

One can recognise an ABC transporter domain in the interval 6-230 (LSCKNVSKKY…DGELELVINS (225 aa)). 42–49 (GLSGSGKT) provides a ligand contact to ATP.

This sequence belongs to the ABC transporter superfamily. Lipoprotein translocase (TC 3.A.1.125) family. The complex is composed of two ATP-binding proteins (LolD) and two transmembrane proteins (LolC and LolE).

It is found in the cell inner membrane. Part of the ABC transporter complex LolCDE involved in the translocation of mature outer membrane-directed lipoproteins, from the inner membrane to the periplasmic chaperone, LolA. Responsible for the formation of the LolA-lipoprotein complex in an ATP-dependent manner. The protein is Lipoprotein-releasing system ATP-binding protein LolD of Francisella tularensis subsp. holarctica (strain OSU18).